A 237-amino-acid polypeptide reads, in one-letter code: GCN5-related N-acetyltransferase 3, chloroplastic (237 aa).

Residues Met1–Val93 constitute a chloroplast transit peptide. Positions Ser94 to Ala237 constitute an N-acetyltransferase domain. Residues Leu171–Val173, Arg179–Lys184, Phe207–Asp209, and Phe214 each bind acetyl-CoA.

This sequence belongs to the acetyltransferase family. GNAT subfamily. As to quaternary structure, oligomer. Post-translationally, autoacetylated. In terms of tissue distribution, expressed in green tissues.

Its subcellular location is the plastid. The protein resides in the chloroplast. It catalyses the reaction an N-terminal L-alpha-aminoacyl-[protein] + acetyl-CoA = N-terminal N(alpha)-acetyl-L-alpha-aminoacyl-[protein] + CoA + H(+). The enzyme catalyses L-lysyl-[protein] + acetyl-CoA = N(6)-acetyl-L-lysyl-[protein] + CoA + H(+). Its function is as follows. Protein acetyltransferase with dual specificity triggering both N-alpha-acetylation (NTA) and epsilon-lysine acetylation (KA), possibly with a low efficiency or toward specific plastid substrates. The protein is GCN5-related N-acetyltransferase 3, chloroplastic of Arabidopsis thaliana (Mouse-ear cress).